A 362-amino-acid chain; its full sequence is Outer membrane porin protein OmpD (362 aa).

The first 21 residues, 1–21 (MKLKLVAVAVTSLLAAGVVNA), serve as a signal peptide directing secretion.

The protein belongs to the Gram-negative porin family. As to quaternary structure, homotrimer.

The protein resides in the cell outer membrane. Functionally, forms pores that allow passive diffusion of small molecules across the outer membrane. The chain is Outer membrane porin protein OmpD (ompD) from Salmonella choleraesuis (strain SC-B67).